Here is a 300-residue protein sequence, read N- to C-terminus: Iron-dependent extradiol dioxygenase (300 aa).

VOC domains follow at residues 5-120 (SLAY…AFHG) and 142-270 (GLGH…FGCE). Residue histidine 145 coordinates Fe cation. Residues histidine 200, histidine 215, aspartate 250, and tyrosine 256 each coordinate substrate. Position 215 (histidine 215) interacts with Fe cation. Residue glutamate 266 coordinates Fe cation.

The protein belongs to the extradiol ring-cleavage dioxygenase family. Homodimer. The cofactor is Fe(2+).

It catalyses the reaction 3,4-dihydroxy-9,10-secoandrosta-1,3,5(10)-triene-9,17-dione + O2 = (1E,2Z)-3-hydroxy-5,9,17-trioxo-4,5:9,10-disecoandrosta-1(10),2-dien-4-oate + H(+). It participates in steroid metabolism; cholesterol metabolism. Catalyzes the meta-cleavage of 3,4-dihydroxy-9,10-seconandrost-1,3,5(10)-triene-9,17-dione (3,4-DHSA) to produce 4,5-9,10-diseco-3-hydroxy-5,9,17-trioxoandrosta-1(10),2-diene-4-oic acid (4,9-DSHA). Also involved in biphenyl and polychlorinated biphenyls (PCBs) degradation. The chain is Iron-dependent extradiol dioxygenase (hsaC) from Rhodococcus jostii (strain RHA1).